Here is a 256-residue protein sequence, read N- to C-terminus: Ciliary microtubule associated protein 1A (256 aa).

3 STPGR repeats span residues 66 to 92 (PGPGYLVPSNITVKGKDGTPAYSIYGR), 181 to 206 (PGPGTYRVIDPGTYKHKPPQYSMTAR), and 217 to 242 (PGPGAYSPEKVVMSKAQAPNFSFGIR). Positions 91–115 (GRPRDISSFRTPGPGSYSPERAGKS) are disordered.

Belongs to the CIMAP family.

It is found in the cytoplasm. Its subcellular location is the cytoskeleton. The protein resides in the flagellum axoneme. Functionally, outer dense fibers are filamentous structures located on the outside of the axoneme in the midpiece and principal piece of the mammalian sperm tail. May help to maintain the passive elastic structures and elastic recoil of the sperm tail. In Xenopus laevis (African clawed frog), this protein is Ciliary microtubule associated protein 1A (cimap1a).